We begin with the raw amino-acid sequence, 144 residues long: Probable low molecular weight protein-tyrosine-phosphatase AmsI (144 aa).

Cys-9 functions as the Nucleophile in the catalytic mechanism. Residue Arg-15 is part of the active site. Catalysis depends on Asp-115, which acts as the Proton donor.

The protein belongs to the low molecular weight phosphotyrosine protein phosphatase family.

It catalyses the reaction O-phospho-L-tyrosyl-[protein] + H2O = L-tyrosyl-[protein] + phosphate. Functionally, may function as a phosphatase required for amylovoran (an exopolysaccharide that functions as a virulence factor) production. The chain is Probable low molecular weight protein-tyrosine-phosphatase AmsI (amsI) from Erwinia amylovora (Fire blight bacteria).